We begin with the raw amino-acid sequence, 59 residues long: Large ribosomal subunit protein bL32 (59 aa).

Residues 1 to 59 (MAVQQNKKSPSKRGMHRSHDALTAPALFVDSTTGEVHRPHHISPNGMYRGRKVVKAKGE) form a disordered region. The span at 49–59 (RGRKVVKAKGE) shows a compositional bias: basic residues.

It belongs to the bacterial ribosomal protein bL32 family.

In Neisseria gonorrhoeae (strain ATCC 700825 / FA 1090), this protein is Large ribosomal subunit protein bL32.